The primary structure comprises 103 residues: MSQRKPWEIIIRPIITEKSNRLMEDYNKYTFEVALDASKPEIKYAVEKLFNVKVKKVNTMIVKPKKKRVWNKFRQYGTTKKWKKAIVTLEKGHKIDILEFAQK.

Belongs to the universal ribosomal protein uL23 family. In terms of assembly, part of the 50S ribosomal subunit. Contacts protein L29, and trigger factor when it is bound to the ribosome.

One of the early assembly proteins it binds 23S rRNA. One of the proteins that surrounds the polypeptide exit tunnel on the outside of the ribosome. Forms the main docking site for trigger factor binding to the ribosome. The protein is Large ribosomal subunit protein uL23 of Aquifex aeolicus (strain VF5).